A 95-amino-acid polypeptide reads, in one-letter code: Co-chaperonin GroES (95 aa).

This sequence belongs to the GroES chaperonin family. Heptamer of 7 subunits arranged in a ring. Interacts with the chaperonin GroEL.

The protein localises to the cytoplasm. Its function is as follows. Together with the chaperonin GroEL, plays an essential role in assisting protein folding. The GroEL-GroES system forms a nano-cage that allows encapsulation of the non-native substrate proteins and provides a physical environment optimized to promote and accelerate protein folding. GroES binds to the apical surface of the GroEL ring, thereby capping the opening of the GroEL channel. This chain is Co-chaperonin GroES, found in Bordetella petrii (strain ATCC BAA-461 / DSM 12804 / CCUG 43448).